Here is a 149-residue protein sequence, read N- to C-terminus: UPF0179 protein TON_1048 (149 aa).

This sequence belongs to the UPF0179 family.

This chain is UPF0179 protein TON_1048, found in Thermococcus onnurineus (strain NA1).